A 340-amino-acid chain; its full sequence is Protein-glutamate methylesterase/protein-glutamine glutaminase 1 (340 aa).

Positions lysine 5–isoleucine 122 constitute a Response regulatory domain. Aspartate 56 bears the 4-aspartylphosphate mark. The CheB-type methylesterase domain maps to glycine 148–isoleucine 340. Active-site residues include serine 160, histidine 187, and aspartate 285.

The protein belongs to the CheB family. Post-translationally, phosphorylated by CheA. Phosphorylation of the N-terminal regulatory domain activates the methylesterase activity.

The protein localises to the cytoplasm. It catalyses the reaction [protein]-L-glutamate 5-O-methyl ester + H2O = L-glutamyl-[protein] + methanol + H(+). The catalysed reaction is L-glutaminyl-[protein] + H2O = L-glutamyl-[protein] + NH4(+). In terms of biological role, involved in chemotaxis. Part of a chemotaxis signal transduction system that modulates chemotaxis in response to various stimuli. Catalyzes the demethylation of specific methylglutamate residues introduced into the chemoreceptors (methyl-accepting chemotaxis proteins or MCP) by CheR. Also mediates the irreversible deamidation of specific glutamine residues to glutamic acid. The polypeptide is Protein-glutamate methylesterase/protein-glutamine glutaminase 1 (Carboxydothermus hydrogenoformans (strain ATCC BAA-161 / DSM 6008 / Z-2901)).